A 485-amino-acid polypeptide reads, in one-letter code: 6-phosphogluconate dehydrogenase, decarboxylating (485 aa).

NADP(+) contacts are provided by residues 12-17 (GLAVMG), 35-37 (NRT), 77-79 (VKA), and N105. Substrate-binding positions include N105 and 131 to 133 (SGG). The active-site Proton acceptor is K186. Residue 189–190 (HN) coordinates substrate. The Proton donor role is filled by E193. Substrate contacts are provided by Y194, K263, R290, R449, and H455.

It belongs to the 6-phosphogluconate dehydrogenase family. Homodimer.

It catalyses the reaction 6-phospho-D-gluconate + NADP(+) = D-ribulose 5-phosphate + CO2 + NADPH. It participates in carbohydrate degradation; pentose phosphate pathway; D-ribulose 5-phosphate from D-glucose 6-phosphate (oxidative stage): step 3/3. In terms of biological role, catalyzes the oxidative decarboxylation of 6-phosphogluconate to ribulose 5-phosphate and CO(2), with concomitant reduction of NADP to NADPH. This Cunninghamella elegans protein is 6-phosphogluconate dehydrogenase, decarboxylating (6-PGD).